A 265-amino-acid chain; its full sequence is 1-(5-phosphoribosyl)-5-[(5-phosphoribosylamino)methylideneamino] imidazole-4-carboxamide isomerase (265 aa).

The active-site Proton acceptor is the Asp-8. The Proton donor role is filled by Asp-139.

It belongs to the HisA/HisF family.

Its subcellular location is the cytoplasm. The catalysed reaction is 1-(5-phospho-beta-D-ribosyl)-5-[(5-phospho-beta-D-ribosylamino)methylideneamino]imidazole-4-carboxamide = 5-[(5-phospho-1-deoxy-D-ribulos-1-ylimino)methylamino]-1-(5-phospho-beta-D-ribosyl)imidazole-4-carboxamide. Its pathway is amino-acid biosynthesis; L-histidine biosynthesis; L-histidine from 5-phospho-alpha-D-ribose 1-diphosphate: step 4/9. The chain is 1-(5-phosphoribosyl)-5-[(5-phosphoribosylamino)methylideneamino] imidazole-4-carboxamide isomerase from Herminiimonas arsenicoxydans.